The following is an 84-amino-acid chain: MAKQVKRKRRPQIKINTFCRFTAAGITRIDYKDVDTLLKNINESGKITPSRMTGTSAKFQRQLTTAIKRARFLALIPYTDKHKK.

The protein belongs to the bacterial ribosomal protein bS18 family. Part of the 30S ribosomal subunit. Forms a tight heterodimer with protein bS6.

In terms of biological role, binds as a heterodimer with protein bS6 to the central domain of the 16S rRNA, where it helps stabilize the platform of the 30S subunit. The sequence is that of Small ribosomal subunit protein bS18 from Ruthia magnifica subsp. Calyptogena magnifica.